We begin with the raw amino-acid sequence, 445 residues long: Probable multidrug resistance protein YpnP (445 aa).

A run of 12 helical transmembrane segments spans residues 15 to 35 (LVLF…FQFI), 49 to 69 (LGAA…ILGL), 95 to 115 (AFVV…FFLS), 136 to 156 (LQIQ…STVL), 168 to 188 (FIAF…SVFR), 194 to 214 (AAYS…FYVI), 240 to 260 (IPAG…MSVV), 277 to 297 (LDSI…SMAG), 314 to 334 (LGVI…WVFG), 355 to 375 (LKWI…NGIV), 384 to 404 (VLVL…ALFS), and 411 to 431 (GIGL…FLYY).

The protein belongs to the multi antimicrobial extrusion (MATE) (TC 2.A.66.1) family.

It is found in the cell membrane. This chain is Probable multidrug resistance protein YpnP (ypnP), found in Bacillus subtilis (strain 168).